A 282-amino-acid polypeptide reads, in one-letter code: 4-diphosphocytidyl-2-C-methyl-D-erythritol kinase (282 aa).

Lys-9 is an active-site residue. Residue 98 to 108 (PMGGGLGGGSS) participates in ATP binding. The active site involves Asp-140.

The protein belongs to the GHMP kinase family. IspE subfamily. As to quaternary structure, homodimer.

It catalyses the reaction 4-CDP-2-C-methyl-D-erythritol + ATP = 4-CDP-2-C-methyl-D-erythritol 2-phosphate + ADP + H(+). Its pathway is isoprenoid biosynthesis; isopentenyl diphosphate biosynthesis via DXP pathway; isopentenyl diphosphate from 1-deoxy-D-xylulose 5-phosphate: step 3/6. Its function is as follows. Catalyzes the phosphorylation of the position 2 hydroxy group of 4-diphosphocytidyl-2C-methyl-D-erythritol. The sequence is that of 4-diphosphocytidyl-2-C-methyl-D-erythritol kinase from Salmonella paratyphi A (strain ATCC 9150 / SARB42).